Consider the following 716-residue polypeptide: Radial spoke head protein 4 homolog A (716 aa).

Disordered stretches follow at residues 1-164 (MEDS…CGRR), 375-410 (EGED…PKSF), 506-526 (GEEE…FEEN), and 697-716 (LLAA…DDYD). The segment covering 8 to 25 (KQEKENQEELGETRRPWE) has biased composition (basic and acidic residues). 3 stretches are compositionally biased toward low complexity: residues 29–42 (AASP…SSEP), 54–66 (QSRS…PQSR), and 80–100 (SSPA…LAPA). Polar residues predominate over residues 140–156 (HHTSQSEGNTFQQSQQP). Positions 375–389 (EGEDEEEVEEEDVAE) are enriched in acidic residues. The residue at position 396 (Ser-396) is a Phosphoserine. Acidic residues-rich tracts occupy residues 506–516 (GEEEGEEEEEA) and 701–716 (ENEE…DDYD).

This sequence belongs to the flagellar radial spoke RSP4/6 family. In terms of assembly, interacts with RSPH6A. As to expression, expressed in trachea, lungs, and testes. Very strong expression is detected in nasal brushings.

It localises to the cytoplasm. The protein localises to the cytoskeleton. Its subcellular location is the cilium axoneme. It is found in the cell projection. The protein resides in the cilium. Its function is as follows. Component of the axonemal radial spoke head which plays an important role in ciliary motility. Essential for triplet radial spokes (RS1, RS2 and RS3) head assembly in the motile cilia. The chain is Radial spoke head protein 4 homolog A (RSPH4A) from Homo sapiens (Human).